The chain runs to 205 residues: Holliday junction branch migration complex subunit RuvA (205 aa).

Residues Met1–Ile64 form a domain I region. The tract at residues His65 to Gln143 is domain II. The flexible linker stretch occupies residues Gly144–Ala156. Residues Met157 to Leu205 form a domain III region.

The protein belongs to the RuvA family. Homotetramer. Forms an RuvA(8)-RuvB(12)-Holliday junction (HJ) complex. HJ DNA is sandwiched between 2 RuvA tetramers; dsDNA enters through RuvA and exits via RuvB. An RuvB hexamer assembles on each DNA strand where it exits the tetramer. Each RuvB hexamer is contacted by two RuvA subunits (via domain III) on 2 adjacent RuvB subunits; this complex drives branch migration. In the full resolvosome a probable DNA-RuvA(4)-RuvB(12)-RuvC(2) complex forms which resolves the HJ.

The protein resides in the cytoplasm. Its function is as follows. The RuvA-RuvB-RuvC complex processes Holliday junction (HJ) DNA during genetic recombination and DNA repair, while the RuvA-RuvB complex plays an important role in the rescue of blocked DNA replication forks via replication fork reversal (RFR). RuvA specifically binds to HJ cruciform DNA, conferring on it an open structure. The RuvB hexamer acts as an ATP-dependent pump, pulling dsDNA into and through the RuvAB complex. HJ branch migration allows RuvC to scan DNA until it finds its consensus sequence, where it cleaves and resolves the cruciform DNA. This Sodalis glossinidius (strain morsitans) protein is Holliday junction branch migration complex subunit RuvA.